The following is a 207-amino-acid chain: 8-oxoguanine DNA glycosylase/AP lyase (207 aa).

Active-site residues include lysine 129 and aspartate 147.

It belongs to the type-2 OGG1 family.

It catalyses the reaction 2'-deoxyribonucleotide-(2'-deoxyribose 5'-phosphate)-2'-deoxyribonucleotide-DNA = a 3'-end 2'-deoxyribonucleotide-(2,3-dehydro-2,3-deoxyribose 5'-phosphate)-DNA + a 5'-end 5'-phospho-2'-deoxyribonucleoside-DNA + H(+). Its function is as follows. Catalyzes the excision of an oxidatively damaged form of guanine (7,8-dihydro-8-oxoguanine = 8-oxoG) from DNA. Also cleaves the DNA backbone at apurinic/apyrimidinic sites (AP sites). The polypeptide is 8-oxoguanine DNA glycosylase/AP lyase (Thermotoga maritima (strain ATCC 43589 / DSM 3109 / JCM 10099 / NBRC 100826 / MSB8)).